Here is a 318-residue protein sequence, read N- to C-terminus: Retinol dehydrogenase 11 (318 aa).

Residues 1-21 (MVELMFPLLLLLLPFLLYMAA) form a helical; Signal-anchor for type II membrane protein membrane-spanning segment. The Cytoplasmic portion of the chain corresponds to 22 to 318 (PQIRKMLSSG…SCDLLGLPID (297 aa)). 48–54 (GANTGIG) provides a ligand contact to NADP(+). N6-acetyllysine is present on K112. Substrate is bound at residue S177. The active-site Proton acceptor is Y202.

It belongs to the short-chain dehydrogenases/reductases (SDR) family. As to quaternary structure, interacts with SELENOF. In terms of processing, not glycosylated. As to expression, predominantly expressed in the epithelial cells of prostate, in both basal and luminal secretory cell populations. Expressed at low levels in spleen, thymus, testis, ovary, small intestine, colon, peripherical blood leukocytes, kidney, adrenal gland and fetal liver. Not detected in prostatic fibromuscular stromal cells, endothelial cells, or infiltrating lymphocytes.

Its subcellular location is the endoplasmic reticulum membrane. It carries out the reaction all-trans-retinol + NADP(+) = all-trans-retinal + NADPH + H(+). The enzyme catalyses 11-cis-retinol + NADP(+) = 11-cis-retinal + NADPH + H(+). It catalyses the reaction 9-cis-retinol + NADP(+) = 9-cis-retinal + NADPH + H(+). The catalysed reaction is 13-cis-retinol + NADP(+) = 13-cis-retinal + NADPH + H(+). It functions in the pathway cofactor metabolism; retinol metabolism. SELENOF decreases the retinol dehydrogenase activity. Functionally, retinol dehydrogenase with a clear preference for NADP. Displays high activity towards 9-cis, 11-cis and all-trans-retinol, and to a lesser extent on 13-cis-retinol. Exhibits a low reductive activity towards unsaturated medium-chain aldehydes such as cis -6-nonenal and no activity toward nonanal or 4-hydroxy-nonenal. Has no dehydrogenase activity towards steroid. This Homo sapiens (Human) protein is Retinol dehydrogenase 11 (RDH11).